The following is a 496-amino-acid chain: Putative zinc finger CCCH domain-containing protein 48 (496 aa).

2 disordered regions span residues 1 to 77 (MADS…QPVH) and 108 to 194 (MGAG…HPDD). Acidic residues predominate over residues 143–156 (HLAEEEEEEEEEHY). 3 consecutive C3H1-type zinc fingers follow at residues 377-406 (EHKT…HGED), 439-467 (KYKT…HGEV), and 469-496 (LGKK…RHSY).

This chain is Putative zinc finger CCCH domain-containing protein 48, found in Oryza sativa subsp. japonica (Rice).